An 833-amino-acid chain; its full sequence is Protein translocase subunit SecA (833 aa).

ATP-binding positions include Gln-87, 105-109 (GEGKT), and Asp-494. The interval 789–816 (PAAVAYSGGEAEAGPAQPHREDPKVGRN) is disordered. Basic and acidic residues predominate over residues 806 to 815 (PHREDPKVGR). Zn(2+) is bound by residues Cys-819, Cys-821, Cys-830, and Cys-831.

This sequence belongs to the SecA family. In terms of assembly, monomer and homodimer. Part of the essential Sec protein translocation apparatus which comprises SecA, SecYEG and auxiliary proteins SecDF-YajC and YidC. It depends on Zn(2+) as a cofactor.

The protein resides in the cell inner membrane. The protein localises to the cytoplasm. The enzyme catalyses ATP + H2O + cellular proteinSide 1 = ADP + phosphate + cellular proteinSide 2.. Part of the Sec protein translocase complex. Interacts with the SecYEG preprotein conducting channel. Has a central role in coupling the hydrolysis of ATP to the transfer of proteins into and across the cell membrane, serving as an ATP-driven molecular motor driving the stepwise translocation of polypeptide chains across the membrane. In Nitratidesulfovibrio vulgaris (strain ATCC 29579 / DSM 644 / CCUG 34227 / NCIMB 8303 / VKM B-1760 / Hildenborough) (Desulfovibrio vulgaris), this protein is Protein translocase subunit SecA.